Consider the following 905-residue polypeptide: Protein LONGIFOLIA 2 (905 aa).

Disordered regions lie at residues 42–136 (VSGG…GGLM), 232–268 (RLSL…RSSS), 285–315 (DTEQ…SRSV), 432–585 (STSP…SDSN), 606–626 (CDFP…IKQD), and 690–711 (VPFP…ECSP). Positions 65 to 74 (ESDKETERSS) are enriched in basic and acidic residues. Residues 90 to 117 (FESSSRPSFSSSPRSSSFSSAEVSTTAS) are compositionally biased toward low complexity. The span at 286–296 (TEQRRENRFCD) shows a compositional bias: basic and acidic residues. 3 stretches are compositionally biased toward polar residues: residues 432–461 (STSP…SGKQ), 477–487 (LDSTKSNSPKT), and 501–516 (MTKS…SPRT). Over residues 566-581 (PDDRLSDARSDLRSLR) the composition is skewed to basic and acidic residues.

Interacts (via C-terminus) with TON1A and TON1B.

The protein resides in the cytoplasm. It is found in the cytoskeleton. In association with LNG1, regulates leaf morphology by promoting longitudinal polar cell elongation independently of ROT3. Associates with microtubules and recruits TON1A and TON1B to the cytoskeleton through its C-terminus. In Arabidopsis thaliana (Mouse-ear cress), this protein is Protein LONGIFOLIA 2 (LNG2).